We begin with the raw amino-acid sequence, 208 residues long: Small ribosomal subunit protein uS4 (208 aa).

The region spanning 95–157 (RRIDNVVYRA…DSLKKLVRSN (63 aa)) is the S4 RNA-binding domain.

This sequence belongs to the universal ribosomal protein uS4 family. As to quaternary structure, part of the 30S ribosomal subunit. Contacts protein S5. The interaction surface between S4 and S5 is involved in control of translational fidelity.

Its function is as follows. One of the primary rRNA binding proteins, it binds directly to 16S rRNA where it nucleates assembly of the body of the 30S subunit. In terms of biological role, with S5 and S12 plays an important role in translational accuracy. The sequence is that of Small ribosomal subunit protein uS4 from Borrelia hermsii (strain HS1 / DAH).